The chain runs to 571 residues: Sulfite reductase [NADPH] hemoprotein beta-component (571 aa).

Residues cysteine 435, cysteine 441, cysteine 480, and cysteine 484 each contribute to the [4Fe-4S] cluster site. Cysteine 484 lines the siroheme pocket.

This sequence belongs to the nitrite and sulfite reductase 4Fe-4S domain family. In terms of assembly, alpha(8)-beta(8). The alpha component is a flavoprotein, the beta component is a hemoprotein. Requires siroheme as cofactor. The cofactor is [4Fe-4S] cluster.

The catalysed reaction is hydrogen sulfide + 3 NADP(+) + 3 H2O = sulfite + 3 NADPH + 4 H(+). The protein operates within sulfur metabolism; hydrogen sulfide biosynthesis; hydrogen sulfide from sulfite (NADPH route): step 1/1. In terms of biological role, component of the sulfite reductase complex that catalyzes the 6-electron reduction of sulfite to sulfide. This is one of several activities required for the biosynthesis of L-cysteine from sulfate. This Dickeya chrysanthemi (strain Ech1591) (Dickeya zeae (strain Ech1591)) protein is Sulfite reductase [NADPH] hemoprotein beta-component.